Consider the following 647-residue polypeptide: Threonine--tRNA ligase (647 aa).

The TGS domain maps to M1–T61. The segment at D242 to P540 is catalytic. Zn(2+)-binding residues include C336, H387, and H517.

Belongs to the class-II aminoacyl-tRNA synthetase family. As to quaternary structure, homodimer. Zn(2+) serves as cofactor.

It localises to the cytoplasm. The enzyme catalyses tRNA(Thr) + L-threonine + ATP = L-threonyl-tRNA(Thr) + AMP + diphosphate + H(+). In terms of biological role, catalyzes the attachment of threonine to tRNA(Thr) in a two-step reaction: L-threonine is first activated by ATP to form Thr-AMP and then transferred to the acceptor end of tRNA(Thr). Also edits incorrectly charged L-seryl-tRNA(Thr). The chain is Threonine--tRNA ligase from Streptococcus pneumoniae (strain ATCC 700669 / Spain 23F-1).